We begin with the raw amino-acid sequence, 209 residues long: Ribosomal RNA large subunit methyltransferase E (209 aa).

S-adenosyl-L-methionine-binding residues include Gly63, Trp65, Asp83, Asp99, and Asp124. Lys164 (proton acceptor) is an active-site residue.

This sequence belongs to the class I-like SAM-binding methyltransferase superfamily. RNA methyltransferase RlmE family.

It is found in the cytoplasm. It carries out the reaction uridine(2552) in 23S rRNA + S-adenosyl-L-methionine = 2'-O-methyluridine(2552) in 23S rRNA + S-adenosyl-L-homocysteine + H(+). In terms of biological role, specifically methylates the uridine in position 2552 of 23S rRNA at the 2'-O position of the ribose in the fully assembled 50S ribosomal subunit. The chain is Ribosomal RNA large subunit methyltransferase E from Pseudoalteromonas translucida (strain TAC 125).